A 721-amino-acid chain; its full sequence is Polyribonucleotide nucleotidyltransferase (721 aa).

Aspartate 495 and aspartate 501 together coordinate Mg(2+). Residues 562 to 621 form the KH domain; it reads PRLLSFRIDPELIGTVIGPGGRTIKGITERTNTKIDIEDGGIVTIASHDGAAAEEAQKII. An S1 motif domain is found at 631–699; sequence GEIFTGVVTR…SRGRINLTLR (69 aa). Residues 702–721 form a disordered region; the sequence is SQNSGMSYPEPTPTPVAPLN. Over residues 711–721 the composition is skewed to pro residues; that stretch reads EPTPTPVAPLN.

It belongs to the polyribonucleotide nucleotidyltransferase family. The cofactor is Mg(2+).

It localises to the cytoplasm. It catalyses the reaction RNA(n+1) + phosphate = RNA(n) + a ribonucleoside 5'-diphosphate. In terms of biological role, involved in mRNA degradation. Catalyzes the phosphorolysis of single-stranded polyribonucleotides processively in the 3'- to 5'-direction. This is Polyribonucleotide nucleotidyltransferase from Prochlorococcus marinus (strain MIT 9312).